A 730-amino-acid chain; its full sequence is Propionyl-CoA carboxylase alpha chain, mitochondrial (730 aa).

Residues 1 to 52 (MAGLWVGGSVLVAAGRRGSRSPRPLMRSVALWTLKHVPQYSRQRLLVSRSLC) constitute a mitochondrion transit peptide. The region spanning 62-509 (TFDKILIANR…NTKFLSDVYP (448 aa)) is the Biotin carboxylation domain. Lysine 65 is subject to N6-acetyllysine; alternate. Lysine 65 is subject to N6-succinyllysine; alternate. Lysine 119 carries the post-translational modification N6-succinyllysine. Residue lysine 150 is modified to N6-acetyllysine; alternate. N6-succinyllysine; alternate is present on lysine 150. Lysine 154 is subject to N6-acetyllysine. Lysine 177 provides a ligand contact to ATP. The ATP-grasp domain occupies 181–378 (KLLAKKAKVN…LVQEMIRVAK (198 aa)). Position 188 is an N6-succinyllysine (lysine 188). Lysine 200 is modified (N6-acetyllysine; alternate). An N6-succinyllysine; alternate modification is found at lysine 200. ATP contacts are provided by residues 209–270 (AREI…PRHI), glutamate 261, and asparagine 296. The residue at position 252 (serine 252) is a Phosphoserine. Lysine 262 carries the N6-succinyllysine modification. Residues glutamate 336, glutamate 349, and asparagine 351 each contribute to the Mg(2+) site. Residues glutamate 336, glutamate 349, and asparagine 351 each coordinate Mn(2+). Glutamate 349 is a catalytic residue. Lysine 407 carries the post-translational modification N6-succinyllysine. Residue phenylalanine 409 participates in biotin binding. N6-succinyllysine occurs at positions 502, 513, and 650. The Biotinyl-binding domain maps to 655–730 (KAAEDTSSIL…GEGDLLVELE (76 aa)). Residue lysine 696 is modified to N6-biotinyllysine.

In terms of assembly, the holoenzyme is a dodecamer composed of 6 PCCA/alpha subunits and 6 PCCB/beta subunits. Interacts (via the biotin carboxylation domain) with SIRT4. Interacts with SIRT3 and SIRT5. Requires Mg(2+) as cofactor. Mn(2+) serves as cofactor. It depends on biotin as a cofactor. In terms of processing, acetylated. The biotin cofactor is covalently attached to the C-terminal biotinyl-binding domain and is required for the catalytic activity. Biotinylation is catalyzed by HLCS.

Its subcellular location is the mitochondrion matrix. It catalyses the reaction propanoyl-CoA + hydrogencarbonate + ATP = (S)-methylmalonyl-CoA + ADP + phosphate + H(+). The catalysed reaction is butanoyl-CoA + hydrogencarbonate + ATP = (2S)-ethylmalonyl-CoA + ADP + phosphate + H(+). Its pathway is metabolic intermediate metabolism; propanoyl-CoA degradation; succinyl-CoA from propanoyl-CoA: step 1/3. This is one of the 2 subunits of the biotin-dependent propionyl-CoA carboxylase (PCC), a mitochondrial enzyme involved in the catabolism of odd chain fatty acids, branched-chain amino acids isoleucine, threonine, methionine, and valine and other metabolites. Propionyl-CoA carboxylase catalyzes the carboxylation of propionyl-CoA/propanoyl-CoA to D-methylmalonyl-CoA/(S)-methylmalonyl-CoA. Within the holoenzyme, the alpha subunit catalyzes the ATP-dependent carboxylation of the biotin carried by the biotin carboxyl carrier (BCC) domain, while the beta subunit then tranfers the carboxyl group from carboxylated biotin to propionyl-CoA. Propionyl-CoA carboxylase also significantly acts on butyryl-CoA/butanoyl-CoA, which is converted to ethylmalonyl-CoA/(2S)-ethylmalonyl-CoA at a much lower rate. Other alternative minor substrates include (2E)-butenoyl-CoA/crotonoyl-CoA. The sequence is that of Propionyl-CoA carboxylase alpha chain, mitochondrial from Sus scrofa (Pig).